Reading from the N-terminus, the 219-residue chain is MKRKIVIAVDGTAGSGKTATFNTVAKKIGYEFIDTGLMYRAFTLLCIESEIDFNNKEEIIESLKKFDFSVKNNKPHLNGKEVEKRIQENDIVKFINYVTPIPEVRKFMVEAQRAMVKGGGYIEIGRDITTVVLPNADLKIFLDSSVEARAERRFKQNERLGIKNNNLNEIKNSIINRDEQDFKNGLRKAEDAWLIDNSNIPIQDVVNMVIDKIKELEGN.

11–19 (GTAGSGKTA) provides a ligand contact to ATP.

It belongs to the cytidylate kinase family. Type 1 subfamily.

Its subcellular location is the cytoplasm. It catalyses the reaction CMP + ATP = CDP + ADP. The catalysed reaction is dCMP + ATP = dCDP + ADP. This chain is Cytidylate kinase, found in Mesoplasma florum (strain ATCC 33453 / NBRC 100688 / NCTC 11704 / L1) (Acholeplasma florum).